The chain runs to 390 residues: Elongation factor Tu 2 (390 aa).

A tr-type G domain is found at 10–201 (KPHVNVGTIG…LDEYVAVPPR (192 aa)). Residues 19–26 (GHVDHGKT) form a G1 region. A GTP-binding site is contributed by 19–26 (GHVDHGKT). Thr26 provides a ligand contact to Mg(2+). A G2 region spans residues 55–59 (GITIA). The G3 stretch occupies residues 76 to 79 (DCPG). GTP contacts are provided by residues 76 to 80 (DCPGH) and 131 to 134 (NKAD). The G4 stretch occupies residues 131–134 (NKAD). Positions 168-170 (SAL) are G5.

The protein belongs to the TRAFAC class translation factor GTPase superfamily. Classic translation factor GTPase family. EF-Tu/EF-1A subfamily. In terms of assembly, monomer.

It is found in the cytoplasm. The catalysed reaction is GTP + H2O = GDP + phosphate + H(+). GTP hydrolase that promotes the GTP-dependent binding of aminoacyl-tRNA to the A-site of ribosomes during protein biosynthesis. This is Elongation factor Tu 2 from Wolbachia pipientis wMel.